The sequence spans 76 residues: MNKALFLCLVVLCAAVVFAAEDLQKAKHAPFKRAARCFCPGKPDRGDLWILRGTCPGGYGYTSNCYKWPNICCYPH.

The first 19 residues, 1–19 (MNKALFLCLVVLCAAVVFA), serve as a signal peptide directing secretion. A propeptide spanning residues 20-31 (AEDLQKAKHAPF) is cleaved from the precursor. 3 cysteine pairs are disulfide-bonded: C37–C72, C39–C65, and C55–C73.

The protein belongs to the sea anemone type 3 (BDS) potassium channel toxin family. As to expression, weakly expressed in the ectodermal tissue from the distal and proximal tentacles, body wall, and oral disk.

The protein resides in the secreted. Its subcellular location is the nematocyst. Functionally, blocks Kv3 voltage-gated potassium channels. Reduces blood pressure. This is Kappa-actitoxin-Avd4l from Anemonia viridis (Snakelocks anemone).